The following is a 143-amino-acid chain: Photosystem I reaction center subunit IV A, chloroplastic (143 aa).

The transit peptide at 1–44 (MAMTTASTVFVLPANVTSVAGASSSRSSVSFLPMRNAGSRLVVR) directs the protein to the chloroplast. A disordered region spans residues 43 to 85 (VRAAEDPAPASSSSKDSPAAAAAPDGATATKPKPPPIGPKRGS). Over residues 48 to 73 (DPAPASSSSKDSPAAAAAPDGATATK) the composition is skewed to low complexity.

Belongs to the PsaE family. 2 isoforms may exist. With or without the N-terminal alanine.

The protein localises to the plastid. Its subcellular location is the chloroplast thylakoid membrane. Its function is as follows. Stabilizes the interaction between PsaC and the PSI core, assists the docking of the ferredoxin to PSI and interacts with ferredoxin-NADP oxidoreductase. This is Photosystem I reaction center subunit IV A, chloroplastic (PSAE1) from Arabidopsis thaliana (Mouse-ear cress).